Reading from the N-terminus, the 857-residue chain is Catalase-peroxidase (857 aa).

Positions 207 to 330 (WHSAGTYRVS…LAAVQMGLIY (124 aa)) form a cross-link, tryptophyl-tyrosyl-methioninium (Trp-Tyr) (with M-356). H208 functions as the Proton acceptor in the catalytic mechanism. The segment at residues 330 to 356 (YVNPEGPNGKPDPIAAAKDIRETFGRM) is a cross-link (tryptophyl-tyrosyl-methioninium (Tyr-Met) (with W-207)). A heme b-binding site is contributed by H371.

This sequence belongs to the peroxidase family. Peroxidase/catalase subfamily. Homodimer or homotetramer. Requires heme b as cofactor. Post-translationally, formation of the three residue Trp-Tyr-Met cross-link is important for the catalase, but not the peroxidase activity of the enzyme.

It catalyses the reaction H2O2 + AH2 = A + 2 H2O. The catalysed reaction is 2 H2O2 = O2 + 2 H2O. In terms of biological role, bifunctional enzyme with both catalase and broad-spectrum peroxidase activity. The polypeptide is Catalase-peroxidase (Rhodopirellula baltica (strain DSM 10527 / NCIMB 13988 / SH1)).